A 295-amino-acid chain; its full sequence is Small ribosomal subunit protein uS2 (295 aa).

Residues 232 to 295 are disordered; that stretch reads RRRGTDEKPE…DEQPAAAAAE (64 aa). Basic and acidic residues predominate over residues 252-287; sequence EWERELLEEPKKSDEQPAKSDELPVKTDEQPTKSDE.

The protein belongs to the universal ribosomal protein uS2 family.

The chain is Small ribosomal subunit protein uS2 from Salinispora tropica (strain ATCC BAA-916 / DSM 44818 / JCM 13857 / NBRC 105044 / CNB-440).